We begin with the raw amino-acid sequence, 527 residues long: Formate--tetrahydrofolate ligase (527 aa).

53–60 (TSSGEGKT) contributes to the ATP binding site.

It belongs to the formate--tetrahydrofolate ligase family.

It catalyses the reaction (6S)-5,6,7,8-tetrahydrofolate + formate + ATP = (6R)-10-formyltetrahydrofolate + ADP + phosphate. Its pathway is one-carbon metabolism; tetrahydrofolate interconversion. In Acholeplasma laidlawii (strain PG-8A), this protein is Formate--tetrahydrofolate ligase.